The sequence spans 663 residues: Alcohol oxidase 2 (663 aa).

An FAD-binding site is contributed by 8–38 (DILVLGGGSSGSCIAGRLANLDHSLKVGLIE). The active-site Proton acceptor is the His567. The Microbody targeting signal motif lies at 661–663 (ARF).

Belongs to the GMC oxidoreductase family. Homooctamer. It depends on FAD as a cofactor.

The protein localises to the peroxisome matrix. It catalyses the reaction a primary alcohol + O2 = an aldehyde + H2O2. Its pathway is energy metabolism; methane degradation. Its function is as follows. Minor isoform of alcohol oxidase, which catalyzes the oxidation of methanol to formaldehyde and hydrogen peroxide, the first step in the methanol utilization pathway of methylotrophic yeasts. The protein is Alcohol oxidase 2 (AOX2) of Komagataella phaffii (strain ATCC 76273 / CBS 7435 / CECT 11047 / NRRL Y-11430 / Wegner 21-1) (Yeast).